Here is an 84-residue protein sequence, read N- to C-terminus: Tenecin-1 (84 aa).

The first 19 residues, 1-19, serve as a signal peptide directing secretion; that stretch reads MKLTIFALVACFFILQIAA. A propeptide spanning residues 20–41 is cleaved from the precursor; that stretch reads FPLEEAATAEEIEQGEHIRVKR. 3 cysteine pairs are disulfide-bonded: Cys44-Cys75, Cys61-Cys81, and Cys65-Cys83.

Belongs to the invertebrate defensin family. Type 1 subfamily.

The protein resides in the secreted. In terms of biological role, bactericidal protein produced in response to injury. It is cytotoxic to Gram-positive bacteria. The sequence is that of Tenecin-1 from Tenebrio molitor (Yellow mealworm beetle).